We begin with the raw amino-acid sequence, 906 residues long: Protein translocase subunit SecA (906 aa).

Residues Q86, 104–108 (GEGKT), and D511 each bind ATP. 2 stretches are compositionally biased toward basic and acidic residues: residues 853-865 (HESV…RHDE) and 877-888 (VRREGPKVKRND). The disordered stretch occupies residues 853 to 906 (HESVIDNNQRHDEDEQEEAPKVQQVRREGPKVKRNDPCPCGSGKKYKQCHSKVE). Zn(2+) is bound by residues C890, C892, C901, and H902. The span at 896–906 (KKYKQCHSKVE) shows a compositional bias: basic residues.

This sequence belongs to the SecA family. As to quaternary structure, monomer and homodimer. Part of the essential Sec protein translocation apparatus which comprises SecA, SecYEG and auxiliary proteins SecDF-YajC and YidC. The cofactor is Zn(2+).

Its subcellular location is the cell inner membrane. It is found in the cytoplasm. The catalysed reaction is ATP + H2O + cellular proteinSide 1 = ADP + phosphate + cellular proteinSide 2.. In terms of biological role, part of the Sec protein translocase complex. Interacts with the SecYEG preprotein conducting channel. Has a central role in coupling the hydrolysis of ATP to the transfer of proteins into and across the cell membrane, serving both as a receptor for the preprotein-SecB complex and as an ATP-driven molecular motor driving the stepwise translocation of polypeptide chains across the membrane. The chain is Protein translocase subunit SecA from Francisella tularensis subsp. mediasiatica (strain FSC147).